We begin with the raw amino-acid sequence, 269 residues long: Polyamine aminopropyltransferase (269 aa).

Positions 1 to 226 (MVWFFEYYDG…ALWSFIIGGE (226 aa)) constitute a PABS domain. Gln-28 provides a ligand contact to S-methyl-5'-thioadenosine. Spermidine contacts are provided by His-59 and Asp-83. S-methyl-5'-thioadenosine contacts are provided by residues Asp-102 and 133-134 (DG). The active-site Proton acceptor is Asp-150. Residue 150 to 153 (DSTD) coordinates spermidine.

It belongs to the spermidine/spermine synthase family. Homodimer or homotetramer.

Its subcellular location is the cytoplasm. It catalyses the reaction S-adenosyl 3-(methylsulfanyl)propylamine + putrescine = S-methyl-5'-thioadenosine + spermidine + H(+). The protein operates within amine and polyamine biosynthesis; spermidine biosynthesis; spermidine from putrescine: step 1/1. Its function is as follows. Catalyzes the irreversible transfer of a propylamine group from the amino donor S-adenosylmethioninamine (decarboxy-AdoMet) to putrescine (1,4-diaminobutane) to yield spermidine. The polypeptide is Polyamine aminopropyltransferase (Archaeoglobus fulgidus (strain ATCC 49558 / DSM 4304 / JCM 9628 / NBRC 100126 / VC-16)).